Here is a 147-residue protein sequence, read N- to C-terminus: Hemoglobin subunit beta (147 aa).

Residue Val-2 is modified to N-acetylvaline. Positions 3 to 147 (HLSAEEKGLV…VATALAHKYH (145 aa)) constitute a Globin domain. Position 13 is a phosphothreonine (Thr-13). Ser-45 is modified (phosphoserine). Residue Lys-60 is modified to N6-acetyllysine. His-64 lines the heme b pocket. N6-acetyllysine is present on Lys-83. Residue His-93 coordinates heme b. At Cys-94 the chain carries S-nitrosocysteine. Lys-145 carries the N6-acetyllysine modification.

Belongs to the globin family. As to quaternary structure, heterotetramer of two alpha chains and two beta chains. As to expression, red blood cells.

Involved in oxygen transport from the lung to the various peripheral tissues. This is Hemoglobin subunit beta (HBB) from Scapanus orarius (Coast mole).